The following is a 191-amino-acid chain: Cell division protein SepF (191 aa).

The segment covering 150–164 (TSSSPEEASPSSVST) has biased composition (low complexity). A disordered region spans residues 150-191 (TSSSPEEASPSSVSTENTPQYSLGKNTTPEPAWGNSKLSAYS). Residues 165-178 (ENTPQYSLGKNTTP) show a composition bias toward polar residues.

The protein belongs to the SepF family. As to quaternary structure, homodimer. Interacts with FtsZ.

The protein resides in the cytoplasm. Cell division protein that is part of the divisome complex and is recruited early to the Z-ring. Probably stimulates Z-ring formation, perhaps through the cross-linking of FtsZ protofilaments. Its function overlaps with FtsA. The sequence is that of Cell division protein SepF from Prochlorococcus marinus (strain AS9601).